A 94-amino-acid polypeptide reads, in one-letter code: Small ribosomal subunit protein uS19 (94 aa).

The protein belongs to the universal ribosomal protein uS19 family.

Functionally, protein S19 forms a complex with S13 that binds strongly to the 16S ribosomal RNA. The protein is Small ribosomal subunit protein uS19 of Acidobacterium capsulatum (strain ATCC 51196 / DSM 11244 / BCRC 80197 / JCM 7670 / NBRC 15755 / NCIMB 13165 / 161).